The primary structure comprises 420 residues: Tyrosine--tRNA ligase (420 aa).

Tyr-36 contacts L-tyrosine. Positions 41–50 (PTADSMHIGH) match the 'HIGH' region motif. 2 residues coordinate L-tyrosine: Tyr-170 and Gln-174. The 'KMSKS' region signature appears at 231–235 (KFGKS). Lys-234 provides a ligand contact to ATP. Residues 353 to 420 (TNIVDFIVEA…KKKYFMVKYK (68 aa)) form the S4 RNA-binding domain.

Belongs to the class-I aminoacyl-tRNA synthetase family. TyrS type 1 subfamily. As to quaternary structure, homodimer.

Its subcellular location is the cytoplasm. The enzyme catalyses tRNA(Tyr) + L-tyrosine + ATP = L-tyrosyl-tRNA(Tyr) + AMP + diphosphate + H(+). Its function is as follows. Catalyzes the attachment of tyrosine to tRNA(Tyr) in a two-step reaction: tyrosine is first activated by ATP to form Tyr-AMP and then transferred to the acceptor end of tRNA(Tyr). The chain is Tyrosine--tRNA ligase from Staphylococcus carnosus (strain TM300).